A 129-amino-acid polypeptide reads, in one-letter code: Large ribosomal subunit protein bL12c (129 aa).

Belongs to the bacterial ribosomal protein bL12 family. In terms of assembly, homodimer. Part of the ribosomal stalk of the 50S ribosomal subunit. Forms a multimeric L10(L12)X complex, where L10 forms an elongated spine to which 2 to 4 L12 dimers bind in a sequential fashion. Binds GTP-bound translation factors.

The protein resides in the plastid. It is found in the chloroplast. In terms of biological role, forms part of the ribosomal stalk which helps the ribosome interact with GTP-bound translation factors. Is thus essential for accurate translation. The protein is Large ribosomal subunit protein bL12c of Pyropia yezoensis (Susabi-nori).